We begin with the raw amino-acid sequence, 365 residues long: Undecaprenyl-phosphate alpha-N-acetylglucosaminyl 1-phosphate transferase (365 aa).

A run of 10 helical transmembrane segments spans residues 3–23 (LLTM…FLFV), 45–65 (GLIP…AFLI), 99–119 (IRAF…GLYL), 132–152 (VLGP…INAF), 157–177 (GIDG…GILL), 187–207 (LWCF…LGLL), 213–233 (VFMG…ILLQ), 242–262 (INPV…IAIM), 293–313 (QAFV…VIGE), and 315–335 (LTFI…LLYG).

The protein belongs to the glycosyltransferase 4 family. WecA subfamily. Mg(2+) is required as a cofactor. Mn(2+) serves as cofactor.

It is found in the cell inner membrane. It catalyses the reaction di-trans,octa-cis-undecaprenyl phosphate + UDP-N-acetyl-alpha-D-glucosamine = N-acetyl-alpha-D-glucosaminyl-di-trans,octa-cis-undecaprenyl diphosphate + UMP. It functions in the pathway bacterial outer membrane biogenesis; LPS O-antigen biosynthesis. Its pathway is bacterial outer membrane biogenesis; enterobacterial common antigen biosynthesis. Catalyzes the transfer of the GlcNAc-1-phosphate moiety from UDP-GlcNAc onto the carrier lipid undecaprenyl phosphate (C55-P), yielding GlcNAc-pyrophosphoryl-undecaprenyl (GlcNAc-PP-C55). The chain is Undecaprenyl-phosphate alpha-N-acetylglucosaminyl 1-phosphate transferase from Yersinia pestis.